The following is a 913-amino-acid chain: MRTGSRLLLVLLVWGSAAALNGDLTVRPTCKPGFSEEDYTAFVSQNIMEGQKLLKVKFNNCAGNKGVRYETNSLDFKVRADGTMYAVHQVQMASKQLILMVTAWDPQTLGRWEAIVRFLVGEKLQHNGHKPKGRKSGPVDLAQQQSDTLLPWRQHQSAKGLRRQKRDWVIPPINVPENSRGPFPQQLVRIRSDKDKEIHIRYSITGVGADQPPMEVFSIDPVSGRMYVTRPMDREERASYHLRAHAVDMNGNKVENPIDLYIYVIDMNDNRPEFINQVYNGSVDEGSKPGTYVMTVTANDADDSTTANGMVRYRIVTQTPQSPSQNMFTINSETGDIVTVAAGLDREKVQQYMVIVQATDMEGNLNYGLSNTATAIITVTDVNDNPPEFTTSTYSGEVPENRVEVVVANLTVMDRDQPHSPNWNAIYRIISGDPSGHFTIRTDPVTNEGMVTVVKAVDYEMNRAFMLTVMVSNQAPLASGIQMSFQSTAGVTISVTDVNEAPYFPTNHKLIRLEEGVPTGTVLTTFSAVDPDRFMQQAVRYSKLSDPANWLNINATNGQITTAAVLDRESDYIKNNVYEATFLAADNGIPPASGTGTLQIYLIDINDNAPELLPKEAQICEKPNLNVINITAADADIDPNVGPFVFELPSVPSAVRKNWTITRLNGDYAQLSLRIMYLEAGVYDVPIIVTDSGNPPLYNTSIIKVKVCPCDENGDCTTIGAVAAAGLGTGAIIAILICIIILLTMVLLFVVWMKRREKERHTKQLLIDPEDDVRDNILKYDEEGGGEEDQDYDLSQLQQPETMDHVLNKAPGVRRVDERPIGAEPQYPIRPVIPHPGDIGDFINEGLRAADNDPTAPPYDSLLVFDYEGSGSTAGSVSSLNSSSSGDQDYDYLNDWGPRFKKLADMYGGGEED.

Residues 1 to 19 (MRTGSRLLLVLLVWGSAAA) form the signal peptide. A propeptide spanning residues 20 to 166 (LNGDLTVRPT…SAKGLRRQKR (147 aa)) is cleaved from the precursor. Cadherin domains are found at residues 167 to 274 (DWVI…RPEF), 275 to 389 (INQV…PPEF), 390 to 504 (TTST…APYF), 505 to 610 (PTNH…DNAP), and 611 to 721 (ELLP…TIGA). At 167–731 (DWVIPPINVP…VAAAGLGTGA (565 aa)) the chain is on the extracellular side. N280, N409, N554, N629, N658, and N699 each carry an N-linked (GlcNAc...) asparagine glycan. The chain crosses the membrane as a helical span at residues 732–753 (IIAILICIIILLTMVLLFVVWM). Residues 754–913 (KRREKERHTK…ADMYGGGEED (160 aa)) are Cytoplasmic-facing.

As to expression, embryonic brain and neuronal retina.

The protein resides in the cell membrane. Functionally, cadherins are calcium-dependent cell adhesion proteins. They preferentially interact with themselves in a homophilic manner in connecting cells; cadherins may thus contribute to the sorting of heterogeneous cell types. May play an important role in retinal development. The chain is Cadherin-4 (CDH4) from Gallus gallus (Chicken).